Reading from the N-terminus, the 379-residue chain is Deoxyguanosinetriphosphate triphosphohydrolase-like protein (379 aa).

The HD domain maps to 69 to 200 (RLTHTIEVAQ…ANLADEIAYS (132 aa)).

The protein belongs to the dGTPase family. Type 2 subfamily.

The protein is Deoxyguanosinetriphosphate triphosphohydrolase-like protein of Azoarcus sp. (strain BH72).